Reading from the N-terminus, the 202-residue chain is Probable 1-Cys peroxiredoxin (202 aa).

The Thioredoxin domain maps to 1-148 (STHGKIRIHD…VVRAVDSLLT (148 aa)). Catalysis depends on C30, which acts as the Cysteine sulfenic acid (-SOH) intermediate. Residues 178–201 (KKLFPQGFETKDLPSKKGYLRFTK) carry the Bipartite nuclear localization signal motif.

This sequence belongs to the peroxiredoxin family. Prx6 subfamily. Embryos.

It localises to the nucleus. The protein resides in the cytoplasm. It catalyses the reaction a hydroperoxide + [thioredoxin]-dithiol = an alcohol + [thioredoxin]-disulfide + H2O. Functionally, thiol-specific peroxidase that catalyzes the reduction of hydrogen peroxide and organic hydroperoxides to water and alcohols, respectively. Seems to contribute to the inhibition of germination during stress. The sequence is that of Probable 1-Cys peroxiredoxin from Bromus secalinus (Rye brome).